We begin with the raw amino-acid sequence, 117 residues long: Protein OPG035 (117 aa).

This sequence belongs to the poxviridae OPG035 family.

Its function is as follows. Bcl-2-like protein which contributes to virulence by preventing host NF-kappa-B activation in response to pro-inflammatory stimuli such as TNF-alpha or IL1B. The polypeptide is Protein OPG035 (OPG035) (Bos taurus (Bovine)).